The sequence spans 664 residues: Zinc finger protein 800 (664 aa).

The segment at 69–91 (FECKLCRSLFRGLPNLITHKKFY) adopts a C2H2-type 1; degenerate zinc-finger fold. Lysine 132 participates in a covalent cross-link: Glycyl lysine isopeptide (Lys-Gly) (interchain with G-Cter in SUMO2). Polar residues-rich tracts occupy residues 154–179 (IEVT…EQSK) and 207–224 (SDEQ…SDNS). The disordered stretch occupies residues 154–224 (IEVTESSSTP…QADLETSDNS (71 aa)). The C2H2-type 2 zinc finger occupies 230–253 (LICCLCRKEFNSRRGVRRHIRKVH). Lysine 279 is covalently cross-linked (Glycyl lysine isopeptide (Lys-Gly) (interchain with G-Cter in SUMO2)). Residues 287–310 (RSCPVCCKSFATKANVRRHFDEVH) form a C2H2-type 3 zinc finger. Serine 317 is subject to Phosphoserine. A Phosphothreonine modification is found at threonine 319. The disordered stretch occupies residues 328-349 (QPLFLDSISPKKSFKTRKQKSS). Position 336 is a phosphoserine (serine 336). Positions 339-348 (KSFKTRKQKS) are enriched in basic residues. Residues 357 to 382 (TACKCLLCKRKYSSQIMLKRHMQIVH) form a C2H2-type 4 zinc finger. The interval 388 to 476 (GTNSKREKGP…GGQQKTRKPK (89 aa)) is disordered. Lysine 392 participates in a covalent cross-link: Glycyl lysine isopeptide (Lys-Gly) (interchain with G-Cter in SUMO2). Residue lysine 409 forms a Glycyl lysine isopeptide (Lys-Gly) (interchain with G-Cter in SUMO1); alternate linkage. Lysine 409 is covalently cross-linked (Glycyl lysine isopeptide (Lys-Gly) (interchain with G-Cter in SUMO2); alternate). Residues 416-436 (VESSPPSITHSPQNELKGTNH) are compositionally biased toward polar residues. Serine 422, serine 426, serine 455, serine 457, serine 460, and serine 462 each carry phosphoserine. A compositionally biased stretch (polar residues) spans 458–470 (PKSTSPSAAGGQQ). Residue lysine 476 forms a Glycyl lysine isopeptide (Lys-Gly) (interchain with G-Cter in SUMO2) linkage. C2H2-type zinc fingers lie at residues 486-508 (LYCK…IELH) and 519-542 (YKCP…TVVH). Disordered regions lie at residues 574–599 (KRGP…PSKK) and 635–664 (HHKK…KALV). Residues 577 to 591 (PSRDEAKHSDSKHDG) show a composition bias toward basic and acidic residues. A Glycyl lysine isopeptide (Lys-Gly) (interchain with G-Cter in SUMO2) cross-link involves residue lysine 599. Residues 618-640 (HRCNKCGKAFAKKTYLEHHKKTH) form a C2H2-type 7 zinc finger. Positions 653–664 (TKGRSTRSKALV) are enriched in basic residues.

Belongs to the krueppel C2H2-type zinc-finger protein family.

Its subcellular location is the nucleus. In terms of biological role, may be involved in transcriptional regulation. The sequence is that of Zinc finger protein 800 (ZNF800) from Homo sapiens (Human).